Reading from the N-terminus, the 187-residue chain is Putative manganese efflux pump MntP (187 aa).

A run of 6 helical transmembrane segments spans residues 3-23 (MSAT…ASIG), 41-61 (LIFG…GFFA), 62-82 (SQYI…ILGG), 107-129 (LLVC…LAFL), 143-163 (ATMI…PILG), and 166-186 (AEII…YEHL).

This sequence belongs to the MntP (TC 9.B.29) family.

It localises to the cell inner membrane. Probably functions as a manganese efflux pump. This is Putative manganese efflux pump MntP from Pectobacterium atrosepticum (strain SCRI 1043 / ATCC BAA-672) (Erwinia carotovora subsp. atroseptica).